The primary structure comprises 355 residues: UPF0324 membrane protein PA5383 (355 aa).

Transmembrane regions (helical) follow at residues 20–37 (IPGL…ILLG), 44–66 (HNGI…TLYP), 71–93 (GSAA…LYGL), 100–122 (IAGV…FGLA), 137–159 (TLLI…EPVV), 166–188 (VAVA…PALF), 233–255 (AVIA…SAWL), 275–297 (WFAV…PALV), 307–324 (LLAM…LSAI), and 331–353 (PLLL…TRLA).

This sequence belongs to the UPF0324 family.

It localises to the cell membrane. In Pseudomonas aeruginosa (strain ATCC 15692 / DSM 22644 / CIP 104116 / JCM 14847 / LMG 12228 / 1C / PRS 101 / PAO1), this protein is UPF0324 membrane protein PA5383.